Consider the following 275-residue polypeptide: Putative ABC transporter permease protein ORF2 (275 aa).

Transmembrane regions (helical) follow at residues 11-31 (YFIFLAVWTLIADVPFLFMLF), 74-94 (IAVSISVVLILIISSMAAFAF), 108-128 (LIIAGMAIPIHVTLIPIYVLT), 136-156 (TVFALIGPYVALSLPMSIFIL), 185-205 (ILLPLSAPALITVGIYNGTYL), and 239-259 (IPAIMAFLTLSLLPMLIAYIF). Residues 69-260 (LKNSVIAVSI…LPMLIAYIFG (192 aa)) form the ABC transmembrane type-1 domain.

Belongs to the binding-protein-dependent transport system permease family. MalFG subfamily.

It is found in the cell membrane. The sequence is that of Putative ABC transporter permease protein ORF2 from Caldicellulosiruptor sp. (strain Rt8B.4).